The following is an 897-amino-acid chain: Chromodomain-helicase-DNA-binding protein 1-like (897 aa).

Arg9 carries the omega-N-methylarginine modification. Residues 58 to 223 enclose the Helicase ATP-binding domain; the sequence is AQRFHCQNGC…YSLLSFVEPD (166 aa). 71–78 contributes to the ATP binding site; that stretch reads DEMGLGKT. Residues 174-177 carry the DEAH box motif; it reads DEAH. Positions 351-513 constitute a Helicase C-terminal domain; that stretch reads LLDKLLAFLY…QKPAADADLQ (163 aa). Phosphoserine is present on residues Ser540, Ser607, Ser618, Ser628, and Ser636. A regulatory linker segment (RLS) region spans residues 601 to 635; it reads TLLEKASQEGRSLRNKGSVLIPGLVEGSTKRKRVL. The interval 615–673 is required for ATPase activity; sequence NKGSVLIPGLVEGSTKRKRVLSPEELEDRQKKRQEAAAKRRRLIEEKKRQKEEAEHKKK. Disordered regions lie at residues 628–654 and 687–711; these read STKR…AAKR and LPSE…DYQD. A coiled-coil region spans residues 638–675; sequence EELEDRQKKRQEAAAKRRRLIEEKKRQKEEAEHKKKMA. Residues 642–654 are compositionally biased toward basic and acidic residues; sequence DRQKKRQEAAAKR. Over residues 690-711 the composition is skewed to acidic residues; the sequence is EESEPEDLENGEESSAELDYQD. A Macro domain is found at 704–897; that stretch reads SAELDYQDPD…SSSSSRQLVP (194 aa). A Phosphoserine modification is found at Ser891.

Belongs to the SNF2/RAD54 helicase family. Interacts with nucleosomes; interacts with the acidic patch of histones. Interacts (via macro domain) with PARP1; interacts only when PARP1 is poly-ADP-ribosylated (PARylated). Interacts with CIAO1. Frequently overexpressed in hepatomacellular carcinomas.

The protein localises to the nucleus. It localises to the chromosome. It catalyses the reaction ATP + H2O = ADP + phosphate + H(+). Its activity is regulated as follows. Adopts an inactive conformation in absence of DNA damage. Binding to poly-ADP-ribosylated histones activates the ATP-dependent chromatin remodeler activity. ATP-dependent chromatin remodeler that mediates chromatin-remodeling following DNA damage. Recruited to DNA damage sites through interaction with poly-ADP-ribose: specifically recognizes and binds histones that are poly-ADP-ribosylated on serine residues in response to DNA damage. Poly-ADP-ribose-binding activates the ATP-dependent chromatin remodeler activity, thereby regulating chromatin during DNA repair. Catalyzes nucleosome sliding away from DNA breaks in an ATP-dependent manner. Chromatin remodeling activity promotes PARP2 removal from chromatin. This Homo sapiens (Human) protein is Chromodomain-helicase-DNA-binding protein 1-like.